The chain runs to 124 residues: Putative iron-sulfur cluster insertion protein ErpA (124 aa).

Iron-sulfur cluster is bound by residues C52, C116, and C118.

It belongs to the HesB/IscA family. Homodimer. Iron-sulfur cluster is required as a cofactor.

In terms of biological role, required for insertion of 4Fe-4S clusters. This Ralstonia nicotianae (strain ATCC BAA-1114 / GMI1000) (Ralstonia solanacearum) protein is Putative iron-sulfur cluster insertion protein ErpA.